The sequence spans 182 residues: Biotin carboxyl carrier protein of acetyl-CoA carboxylase (182 aa).

Positions 70–95 (AAPSPSPEPGTSRAADHAVTSSGSQP) are disordered. Residues 104–180 (LAEVASPMVG…EYNQPLMRIK (77 aa)) form the Biotinyl-binding domain. Lys-146 carries the post-translational modification N6-biotinyllysine.

As to quaternary structure, homodimer.

The protein operates within lipid metabolism; fatty acid biosynthesis. This protein is a component of the acetyl coenzyme A carboxylase complex; first, biotin carboxylase catalyzes the carboxylation of the carrier protein and then the transcarboxylase transfers the carboxyl group to form malonyl-CoA. This Nostoc sp. (strain PCC 7120 / SAG 25.82 / UTEX 2576) protein is Biotin carboxyl carrier protein of acetyl-CoA carboxylase (accB).